The following is a 707-amino-acid chain: Ornithine decarboxylase (707 aa).

The disordered stretch occupies residues 83–102 (NRNPLSRADSAAGREETAQT). Residue Lys-288 is modified to N6-(pyridoxal phosphate)lysine. Pyridoxal 5'-phosphate contacts are provided by residues Ser-421, Gly-458, and 498 to 501 (EPGR). Substrate is bound at residue 561–562 (FD). The Proton donor; shared with dimeric partner role is filled by Cys-634. Asp-635 is a substrate binding site. Residue Tyr-663 participates in pyridoxal 5'-phosphate binding.

It belongs to the Orn/Lys/Arg decarboxylase class-II family. As to quaternary structure, homodimer. Only the dimer is catalytically active, as the active sites are constructed of residues from both monomers. Requires pyridoxal 5'-phosphate as cofactor.

It catalyses the reaction L-ornithine + H(+) = putrescine + CO2. Its pathway is amine and polyamine biosynthesis; putrescine biosynthesis via L-ornithine pathway; putrescine from L-ornithine: step 1/1. With respect to regulation, inhibited by antizyme (AZ) in response to polyamine levels. AZ inhibits the assembly of the functional homodimer by binding to ODC monomers and targeting them for ubiquitin-independent proteolytic destruction by the 26S proteasome. Inhibited by 1-amino-oxy-3-aminopropane (APA, an isosteric analog of putrescine). Irreversibly inhibited by alpha-difluoromethylornithine (DFMO, a curative agent of West African sleeping sickness). In terms of biological role, catalyzes the first and rate-limiting step of polyamine biosynthesis that converts ornithine into putrescine, which is the precursor for the polyamines, spermidine and spermine. Polyamines are essential for cell proliferation and are implicated in cellular processes, ranging from DNA replication to apoptosis. This is Ornithine decarboxylase from Leishmania donovani.